We begin with the raw amino-acid sequence, 303 residues long: Kynurenine formamidase (303 aa).

Residues 95–99 (HGGYW) carry the HGGXW motif. The active-site Nucleophile is the S164. Catalysis depends on residues D247 and H279.

Belongs to the kynurenine formamidase family. In terms of assembly, homodimer.

The protein resides in the cytoplasm. Its subcellular location is the cytosol. It localises to the nucleus. The enzyme catalyses N-formyl-L-kynurenine + H2O = L-kynurenine + formate + H(+). Its pathway is amino-acid degradation; L-tryptophan degradation via kynurenine pathway; L-kynurenine from L-tryptophan: step 2/2. Its function is as follows. Catalyzes the hydrolysis of N-formyl-L-kynurenine to L-kynurenine, the second step in the kynurenine pathway of tryptophan degradation. Kynurenine may be further oxidized to nicotinic acid, NAD(H) and NADP(H). Required for elimination of toxic metabolites. This is Kynurenine formamidase from Homo sapiens (Human).